Reading from the N-terminus, the 116-residue chain is Flagellar transcriptional regulator FlhD (116 aa).

The protein belongs to the FlhD family. Homodimer; disulfide-linked. Forms a heterohexamer composed of two FlhC and four FlhD subunits. Each FlhC binds a FlhD dimer, forming a heterotrimer, and a hexamer assembles by dimerization of two heterotrimers.

It is found in the cytoplasm. In terms of biological role, functions in complex with FlhC as a master transcriptional regulator that regulates transcription of several flagellar and non-flagellar operons by binding to their promoter region. Activates expression of class 2 flagellar genes, including fliA, which is a flagellum-specific sigma factor that turns on the class 3 genes. Also regulates genes whose products function in a variety of physiological pathways. This chain is Flagellar transcriptional regulator FlhD, found in Enterobacter sp. (strain 22).